The sequence spans 222 residues: Large ribosomal subunit protein mL64 (222 aa).

2 disordered regions span residues 19 to 46 (APGS…EDLL) and 188 to 222 (KRLK…APSS). Over residues 25-36 (YRARPPPRRRPG) the composition is skewed to basic residues. Positions 99 to 212 (MQESLRVKQL…AAALAAAVAQ (114 aa)) form a coiled coil. Positions 184–200 (KKERKRLKEEKQKRKKE) match the Nuclear localization signal motif. Low complexity predominate over residues 203–212 (AAALAAAVAQ).

Belongs to the mitochondrion-specific ribosomal protein mL64 family. As to quaternary structure, component of the mitochondrial large ribosomal subunit (mt-LSU). Mature mammalian 55S mitochondrial ribosomes consist of a small (28S) and a large (39S) subunit. The 28S small subunit contains a 12S ribosomal RNA (12S mt-rRNA) and 30 different proteins. The 39S large subunit contains a 16S rRNA (16S mt-rRNA), a copy of mitochondrial valine transfer RNA (mt-tRNA(Val)), which plays an integral structural role, and 52 different proteins. Interacts with GADD45A, GADD45B and GADD45G. Interacts with NR4A1 via the NR4A1 AB domain. Interacts with ATAD3A and ATAD3B. (Microbial infection) Interacts with the human papilloma virus type 16 (HPV 16) minor capsid protein L2. Widely expressed. Highly expressed in the thyroid gland, heart, lymph nodes, trachea and adrenal tissues. Expressed at lower level in liver skeletal muscle, kidney, pancreas, testis, ovary and stomach. Barely detectable in adrenal adenoma and papillary thyroid cancer.

It is found in the mitochondrion. It localises to the nucleus. Acts as a negative regulator of G1 to S cell cycle phase progression by inhibiting cyclin-dependent kinases. Inhibitory effects are additive with GADD45 proteins but also occur in the absence of GADD45 proteins. Acts as a repressor of the orphan nuclear receptor NR4A1 by inhibiting AB domain-mediated transcriptional activity. May be involved in the hormone-mediated regulation of NR4A1 transcriptional activity. May play a role in mitochondrial protein synthesis. This Homo sapiens (Human) protein is Large ribosomal subunit protein mL64 (GADD45GIP1).